Here is a 629-residue protein sequence, read N- to C-terminus: Neuronal acetylcholine receptor subunit alpha-4 (629 aa).

Positions 1–30 (MEIGGSGAPPPLLLLPLLLLLGTGLLPASS) are cleaved as a signal peptide. Over 32-249 (IETRAHAEER…IIRRLPLFYT (218 aa)) the chain is Extracellular. Asparagine 59 carries an N-linked (GlcNAc...) asparagine glycan. The Ca(2+) site is built by valine 78 and glutamate 80. N-linked (GlcNAc...) asparagine glycosylation is found at asparagine 109 and asparagine 176. 2 disulfide bridges follow: cysteine 163–cysteine 177 and cysteine 227–cysteine 228. The helical transmembrane segment at 250–270 (INLIIPCLLISCLTVLVFYLP) threads the bilayer. Cysteine 273 carries the S-palmitoyl cysteine lipid modification. A run of 2 helical transmembrane segments spans residues 279–299 (LCISVLLSLTVFLLLITEIIP) and 312–332 (LLFTMIFVTLSIVITVFVLNV). Topologically, residues 333-603 (HHRSPRTHTM…KYVAMVIDRI (271 aa)) are cytoplasmic. Disordered stretches follow at residues 420–459 (ETQPTCRSPSHKVPDLKTSEVEKASPCPSPGSCHPPNSSG) and 503–529 (SLTESKPTGSPASLKTRPSQLPVSDQT). Serine 427 is modified (phosphoserine). Residues 431–442 (KVPDLKTSEVEK) show a composition bias toward basic and acidic residues. Over residues 449–459 (PGSCHPPNSSG) the composition is skewed to low complexity. The segment covering 504 to 529 (LTESKPTGSPASLKTRPSQLPVSDQT) has biased composition (polar residues). Residues serine 540 and serine 543 each carry the phosphoserine modification. The helical transmembrane segment at 604–624 (FLWMFIIVCLLGTVGLFLPPW) threads the bilayer.

Belongs to the ligand-gated ion channel (TC 1.A.9) family. Acetylcholine receptor (TC 1.A.9.1) subfamily. Alpha-4/CHRNA4 sub-subfamily. Neuronal AChR is composed of two different types of subunits: alpha and beta. CHRNA4 forms heteropentameric neuronal acetylcholine receptors with CHRNB2 and CHRNB4, as well as CHRNA5 and CHRNB3 as accesory subunits. Found in two major stoichiometric forms, LS (low agonist sensitivity): (CHRNA4)3:(CHRNB2)2 and HS (high agonist sensitivity): (CHRNA4)2:(CHRNB2)3, the two stoichiometric forms differ in their unitary conductance, calcium permeability, ACh sensitivity and potentiation by divalent cation. Cells produce predominantly an (CHRNA4)3:(CHRNB2)2 nAChR. The (CHRNA4)2:(CHRNB2)3 expression is selectively up-regulated by nicotine and has lower single channel conductance and calcium permeability. In the striatum, also forms CHRNA4:CHRNA6:CHRNB2 complexes. Also found in the stoichiometric form: (CHRNA4:CHRNB2)2:CHRNB3. Interacts with RIC3; which is required for proper folding and assembly. Interacts with LYPD6.

It localises to the synaptic cell membrane. Its subcellular location is the cell membrane. The enzyme catalyses K(+)(in) = K(+)(out). The catalysed reaction is Na(+)(in) = Na(+)(out). It carries out the reaction Ca(2+)(in) = Ca(2+)(out). Activated by a myriad of ligands such as acetylcholine, cytisine, nicotine, choline and epibatidine. Channel potentiation by calcium is stoichiometry-selective, CHRNA4:CHRNB2 nACh receptor is achieved by calcium association with topographically distinct sites framed by anionic residues within the CHRNA4 subunit and between the CHRNA4 and CHRNB2 subunits. nAChR activity is inhibited by the antagonist alpha-conotoxins BuIA, PnIA, GID and MII, small disulfide-constrained peptides from cone snails. Functionally, component of neuronal acetylcholine receptors (nAChRs) that function as pentameric, ligand-gated cation channels with high calcium permeability among other activities. nAChRs are excitatory neurotrasnmitter receptors formed by a collection of nAChR subunits known to mediate synaptic transmission in the nervous system and the neuromuscular junction. Each nAchR subunit confers differential attributes to channel properties, including activation, deactivation and desensitization kinetics, pH sensitivity, cation permeability, and binding to allosteric modulators. CHRNA4 forms heteropentameric neuronal acetylcholine receptors with CHRNB2 and CHRNB4, as well as CHRNA5 and CHRNB3 as accesory subunits. Is the most abundant nAChR subtype expressed in the central nervous system. Found in two major stoichiometric forms,(CHRNA4)3:(CHRNB2)2 and (CHRNA4)2:(CHRNB2)3, the two stoichiometric forms differ in their unitary conductance, calcium permeability, ACh sensitivity and potentiation by divalent cation. Involved in the modulation of calcium-dependent signaling pathways, influences the release of neurotransmitters, including dopamine, glutamate and GABA. This Mus musculus (Mouse) protein is Neuronal acetylcholine receptor subunit alpha-4 (Chrna4).